Here is a 502-residue protein sequence, read N- to C-terminus: Archaemetzincin-1 (502 aa).

A Zn(2+)-binding site is contributed by H262. The active-site Proton acceptor is E263. 5 residues coordinate Zn(2+): H266, C273, C278, C297, and C300. The tract at residues 336–383 (GEPSVSEDTLPFSADSGMGCESDTEPVTSPSEPVTPDGWSHPFPDGPE) is disordered.

Belongs to the peptidase M54 family. Requires Zn(2+) as cofactor.

Probable zinc metalloprotease. In Mus musculus (Mouse), this protein is Archaemetzincin-1 (Amz1).